The chain runs to 562 residues: Urocanate hydratase (562 aa).

NAD(+) is bound by residues 52–53, Gln-130, 176–178, Glu-196, Arg-201, 242–243, 263–267, 273–274, and Tyr-322; these read GG, GMG, NA, QTSAH, and YL. Cys-410 is an active-site residue. Gly-492 is a binding site for NAD(+).

This sequence belongs to the urocanase family. The cofactor is NAD(+).

It is found in the cytoplasm. The enzyme catalyses 4-imidazolone-5-propanoate = trans-urocanate + H2O. Its pathway is amino-acid degradation; L-histidine degradation into L-glutamate; N-formimidoyl-L-glutamate from L-histidine: step 2/3. Functionally, catalyzes the conversion of urocanate to 4-imidazolone-5-propionate. The polypeptide is Urocanate hydratase (Klebsiella pneumoniae subsp. pneumoniae (strain ATCC 700721 / MGH 78578)).